A 307-amino-acid polypeptide reads, in one-letter code: S-methyl-5'-thioadenosine phosphorylase (307 aa).

Residues Thr-20, Arg-62 to His-63, and Ser-95 to Ala-96 contribute to the phosphate site. Substrate is bound at residue Met-197. Ser-198 lines the phosphate pocket. Asp-221–Asp-223 lines the substrate pocket.

Belongs to the PNP/MTAP phosphorylase family. MTAP subfamily. Homotrimer.

Its subcellular location is the cytoplasm. It localises to the nucleus. The catalysed reaction is S-methyl-5'-thioadenosine + phosphate = 5-(methylsulfanyl)-alpha-D-ribose 1-phosphate + adenine. It functions in the pathway amino-acid biosynthesis; L-methionine biosynthesis via salvage pathway; S-methyl-5-thio-alpha-D-ribose 1-phosphate from S-methyl-5'-thioadenosine (phosphorylase route): step 1/1. Its function is as follows. Catalyzes the reversible phosphorylation of S-methyl-5'-thioadenosine (MTA) to adenine and 5-methylthioribose-1-phosphate. Involved in the breakdown of MTA, a major by-product of polyamine biosynthesis. Responsible for the first step in the methionine salvage pathway after MTA has been generated from S-adenosylmethionine. Has broad substrate specificity with 6-aminopurine nucleosides as preferred substrates. The polypeptide is S-methyl-5'-thioadenosine phosphorylase (Fusarium vanettenii (strain ATCC MYA-4622 / CBS 123669 / FGSC 9596 / NRRL 45880 / 77-13-4) (Fusarium solani subsp. pisi)).